Here is a 496-residue protein sequence, read N- to C-terminus: Serine/threonine-protein kinase Sgk3 (496 aa).

The PX domain occupies 12 to 124; the sequence is SCPSVSIPSS…AFLQMDSPRH (113 aa). The tract at residues 121–157 is disordered; it reads SPRHQSDPSEDEDERSTPKPHSTSRNINLGPTGNPHA. Residues S126 and S129 each carry the phosphoserine modification. Over residues 139-151 the composition is skewed to polar residues; sequence KPHSTSRNINLGP. One can recognise a Protein kinase domain in the interval 162 to 464; sequence FDFLKVIGKG…EETVPYSVCV (303 aa). ATP contacts are provided by residues 168 to 176 and K191; that span reads IGKGSFGKV. Residues 195 to 205 carry the Nuclear localization signal motif; that stretch reads KKIVLNRKEQK. The active-site Proton acceptor is D286. Position 320 is a phosphothreonine; by PDPK1 (T320). One can recognise an AGC-kinase C-terminal domain in the interval 420 to 496; the sequence is ESLSWTDLVQ…YAPPSEDLFL (77 aa). Position 486 is a phosphoserine (S486).

Belongs to the protein kinase superfamily. AGC Ser/Thr protein kinase family. In terms of assembly, interacts with GSK3B and FLII. Interacts with PDPK1 in a phosphorylation-dependent manner. Activated by phosphorylation on Ser-486 by an unknown kinase (may be mTORC2 but not confirmed), transforming it into a substrate for PDPK1 which then phosphorylates it on Thr-320.

The protein resides in the cytoplasmic vesicle. The protein localises to the early endosome. Its subcellular location is the recycling endosome. The enzyme catalyses L-seryl-[protein] + ATP = O-phospho-L-seryl-[protein] + ADP + H(+). It carries out the reaction L-threonyl-[protein] + ATP = O-phospho-L-threonyl-[protein] + ADP + H(+). Two specific sites, one in the kinase domain (Thr-320) and the other in the C-terminal regulatory region (Ser-486), need to be phosphorylated for its full activation. Functionally, serine/threonine-protein kinase which is involved in the regulation of a wide variety of ion channels, membrane transporters, cell growth, proliferation, survival and migration. Up-regulates Na(+) channels: SCNN1A/ENAC and SCN5A, K(+) channels: KCNA3/KV1.3, KCNE1, KCNQ1 and KCNH2/HERG, epithelial Ca(2+) channels: TRPV5 and TRPV6, chloride channel: BSND, creatine transporter: SLC6A8, Na(+)/dicarboxylate cotransporter: SLC13A2/NADC1, Na(+)-dependent phosphate cotransporter: SLC34A2/NAPI-2B, amino acid transporters: SLC1A5/ASCT2 and SLC6A19, glutamate transporters: SLC1A3/EAAT1, SLC1A6/EAAT4 and SLC1A7/EAAT5, glutamate receptors: GRIA1/GLUR1 and GRIK2/GLUR6, Na(+)/H(+) exchanger: SLC9A3/NHE3, and the Na(+)/K(+) ATPase. Plays a role in the regulation of renal tubular phosphate transport and bone density. Phosphorylates NEDD4L and GSK3B. Positively regulates ER transcription activity through phosphorylation of FLII. Negatively regulates the function of ITCH/AIP4 via its phosphorylation and thereby prevents CXCR4 from being efficiently sorted to lysosomes. This chain is Serine/threonine-protein kinase Sgk3 (Sgk3), found in Rattus norvegicus (Rat).